The primary structure comprises 473 residues: Hyaluronidase-2 (473 aa).

Residues 1–20 (MRAGPGPTVTLALVLAVSWA) form the signal peptide. Disulfide bonds link Cys47-Cys340 and Cys211-Cys227. Residues Asn74 and Asn103 are each glycosylated (N-linked (GlcNAc...) asparagine). Glu135 functions as the Proton donor in the catalytic mechanism. A glycan (N-linked (GlcNAc...) asparagine) is linked at Asn357. Residues 361-439 (ATQYCSRAQC…YLGWSGEQCQ (79 aa)) form the EGF-like domain. 3 disulfide bridges follow: Cys365/Cys376, Cys370/Cys427, and Cys429/Cys438. The GPI-anchor amidated glycine moiety is linked to residue Gly448. Positions 449–473 (ASEAWAGSHLTSLLALAALAFTWTL) are cleaved as a propeptide — removed in mature form.

The protein belongs to the glycosyl hydrolase 56 family. As to quaternary structure, interacts with MST1R. As to expression, widely expressed (at protein level).

Its subcellular location is the cell membrane. It catalyses the reaction Random hydrolysis of (1-&gt;4)-linkages between N-acetyl-beta-D-glucosamine and D-glucuronate residues in hyaluronate.. Functionally, catalyzes hyaluronan degradation into small fragments that are endocytosed and degraded in lysosomes by HYAL1 and exoglycosidases. Essential for the breakdown of extracellular matrix hyaluronan. The protein is Hyaluronidase-2 (HYAL2) of Homo sapiens (Human).